The sequence spans 173 residues: FMN reductase (NADH) RutF 2 (173 aa).

This sequence belongs to the non-flavoprotein flavin reductase family. RutF subfamily.

The catalysed reaction is FMNH2 + NAD(+) = FMN + NADH + 2 H(+). Functionally, catalyzes the reduction of FMN to FMNH2 which is used to reduce pyrimidine by RutA via the Rut pathway. The chain is FMN reductase (NADH) RutF 2 from Rhizobium rhizogenes (strain K84 / ATCC BAA-868) (Agrobacterium radiobacter).